We begin with the raw amino-acid sequence, 570 residues long: Ribosome-inactivating protein SNAI (570 aa).

An N-terminal signal peptide occupies residues 1–28; sequence MRLVAKLLYLAVLAICGLGIHGALTHPR. N-linked (GlcNAc...) asparagine glycosylation is found at Asn40, Asn62, and Asn144. Glu199 is a catalytic residue. N-linked (GlcNAc...) asparagine glycosylation is present at Asn260. Intrachain disulfides connect Cys284/Cys316, Cys332/Cys351, and Cys373/Cys385. Ricin B-type lectin domains are found at residues 319 to 439 and 441 to 566; these read VEVT…WTVG and VEPL…WITT. The stretch at 329–369 is one 1-alpha repeat; that stretch reads DGLCVDVRYGHYIDGNPVQLRPCGNECNQLWTFRTDGTIRW. The stretch at 370-405 is one 1-beta repeat; that stretch reads LGKCLTASSSVMIYDCNTVPPEATKWVVSIDGTITN. The stretch at 408 to 440 is one 1-gamma repeat; that stretch reads SGLVLTAPQAAEGTALSLENNIHAARQGWTVGD. The 2-alpha repeat unit spans residues 452–489; sequence KQMCLRENGENNFVWLEDCVLNRVQQEWALYGDGTIRV. Cys455 and Cys470 form a disulfide bridge. A glycan (N-linked (GlcNAc...) asparagine) is linked at Asn492. The 2-beta repeat unit spans residues 493 to 531; it reads RSLCVTSEDHEPSDLIVILKCEGSGNQRWVFNTNGTISN. Cys496 and Cys513 are oxidised to a cystine. An N-linked (GlcNAc...) asparagine glycan is attached at Asn526. A 2-gamma repeat occupies 534–567; it reads AKLLMDVAQRDVSLRKIILYRPTGNPNQQWITTT.

This sequence belongs to the ribosome-inactivating protein family. Type 2 RIP subfamily. Tetramer of four pairs of disulfide bound A-B chains. Post-translationally, the precursor is processed in two chains, A and B, that are linked by a disulfide bond. A small truncated form corresponding roughly to the second ricin B-type lectin domain of the B chain, TrSNAI, can also be produced. Glycosylated. N-glycans of subunit A are (Man)2-3(Xyl)(GlcNAc)2(Fuc) at Asn-40, (GlcNAc)0-2(Man)3(Xyl)(GlcNAc)2(Fuc) or (Man)1-2(GlcNAc)2 at Asn-62, (Man)3(Xyl)(GlcNAc)2(Fuc)0-1 at Asn-144 and (GlcNAc)0-1(Man)3(Xyl)(GlcNAc)2(Fuc) at Asn-260. N-glycans of subunit B are (Man)3(Xyl)(GlcNAc)2(Fuc) at Asn-492 and (Man)6-9(GlcNAc)2 at Asn-526. In terms of tissue distribution, expressed in bark.

The catalysed reaction is Endohydrolysis of the N-glycosidic bond at one specific adenosine on the 28S rRNA.. Its function is as follows. Neu5Ac(alpha2-6)Gal/GalNAc specific agglutinin. Behaves as a type-2 ribosome-inactivating protein. Strongly inhibits mammalian but not plant ribosomes. The A chain is responsible for inhibiting protein synthesis through the catalytic inactivation of 60S ribosomal subunits by removing adenine from position 4,324 of 28S rRNA. The B chain binds to cell receptors and probably facilitates the entry into the cell of the A chain; B chains are also responsible for cell agglutination (lectin activity). Involved in plant defense against insects. Binds Neu5Ac(alpha2-6)Gal/GalNAc but has no clear agglutination activity. In Sambucus nigra (European elder), this protein is Ribosome-inactivating protein SNAI.